The sequence spans 206 residues: Protein sym1 (206 aa).

2 helical membrane-spanning segments follow: residues 107–127 (VLLDQAVFAPFGTAFFFSWMT) and 169–189 (LQYQMPFACTVAIFWNIFLSL).

Belongs to the peroxisomal membrane protein PXMP2/4 family.

The protein resides in the mitochondrion inner membrane. This is Protein sym1 (sym1) from Schizosaccharomyces pombe (strain 972 / ATCC 24843) (Fission yeast).